The sequence spans 140 residues: 3-hydroxyacyl-[acyl-carrier-protein] dehydratase FabZ (140 aa).

The active site involves histidine 48.

Belongs to the thioester dehydratase family. FabZ subfamily.

The protein resides in the cytoplasm. It catalyses the reaction a (3R)-hydroxyacyl-[ACP] = a (2E)-enoyl-[ACP] + H2O. Involved in unsaturated fatty acids biosynthesis. Catalyzes the dehydration of short chain beta-hydroxyacyl-ACPs and long chain saturated and unsaturated beta-hydroxyacyl-ACPs. In Ligilactobacillus salivarius (strain UCC118) (Lactobacillus salivarius), this protein is 3-hydroxyacyl-[acyl-carrier-protein] dehydratase FabZ.